The chain runs to 189 residues: MGAKDLNQRIDAKRIEQGITTLDDIQFEERLLEAARTTRVTKGGKRFSFSALVVIGDKRGYVGFGLGKAREVPLSIAKAIEDAKKKTIRVPIVNGTIPHDVVGEYGSARIIAFPARRGTGVIAGGAAKPIFELAGYTDVLTKVVGSSNHHNVVRAVFDALLKLRDIDAIAKVKGATVEDLRERYNIYAR.

In terms of domain architecture, S5 DRBM spans 27 to 90; sequence FEERLLEAAR…EDAKKKTIRV (64 aa).

This sequence belongs to the universal ribosomal protein uS5 family. Part of the 30S ribosomal subunit. Contacts proteins S4 and S8.

With S4 and S12 plays an important role in translational accuracy. Its function is as follows. Located at the back of the 30S subunit body where it stabilizes the conformation of the head with respect to the body. The chain is Small ribosomal subunit protein uS5 from Hydrogenobaculum sp. (strain Y04AAS1).